The chain runs to 656 residues: Protein teflon (656 aa).

The C2H2-type 1 zinc-finger motif lies at 33–56 (LYCHFCRDLFTQLPEFLRHLQSNH). The segment at 80–131 (DKAHEDAQSAGHNSSSGDSRSLMNSEDSRAIDGSEENSDNSPVKPEQIGKQN) is disordered. Positions 89 to 104 (AGHNSSSGDSRSLMNS) are enriched in polar residues. C2H2-type zinc fingers lie at residues 606–628 (YFCK…LISH) and 632–655 (FQCT…RNAH).

Belongs to the Teflon family.

It localises to the nucleus. The protein resides in the chromosome. Functionally, specifically required in males for proper segregation of autosomal bivalents at meiosis I. Expression is required in the male germ line prior to spermatocyte stage S4. May have a role as a bridging molecule maintaining adhesion to hold autosome bivalents together via heterochromatic connections. The sequence is that of Protein teflon from Drosophila sechellia (Fruit fly).